The following is a 391-amino-acid chain: Alkanesulfonate monooxygenase (391 aa).

Belongs to the SsuD family.

The catalysed reaction is an alkanesulfonate + FMNH2 + O2 = an aldehyde + FMN + sulfite + H2O + 2 H(+). In terms of biological role, catalyzes the desulfonation of aliphatic sulfonates. The polypeptide is Alkanesulfonate monooxygenase (Rhodopseudomonas palustris (strain ATCC BAA-98 / CGA009)).